A 122-amino-acid polypeptide reads, in one-letter code: Large ribosomal subunit protein uL14 (122 aa).

Belongs to the universal ribosomal protein uL14 family. In terms of assembly, part of the 50S ribosomal subunit. Forms a cluster with proteins L3 and L19. In the 70S ribosome, L14 and L19 interact and together make contacts with the 16S rRNA in bridges B5 and B8.

Binds to 23S rRNA. Forms part of two intersubunit bridges in the 70S ribosome. The sequence is that of Large ribosomal subunit protein uL14 from Streptococcus gordonii (strain Challis / ATCC 35105 / BCRC 15272 / CH1 / DL1 / V288).